A 645-amino-acid polypeptide reads, in one-letter code: tRNA 5-methylaminomethyl-2-thiouridine biosynthesis bifunctional protein MnmC (645 aa).

The interval 1–230 (MPMSEPIDWL…KRHNLHAVFD (230 aa)) is tRNA (mnm(5)s(2)U34)-methyltransferase. The tract at residues 254 to 645 (LGAGIAGAAA…LASERLGRRR (392 aa)) is FAD-dependent cmnm(5)s(2)U34 oxidoreductase.

In the N-terminal section; belongs to the methyltransferase superfamily. tRNA (mnm(5)s(2)U34)-methyltransferase family. It in the C-terminal section; belongs to the DAO family. The cofactor is FAD.

It is found in the cytoplasm. The catalysed reaction is 5-aminomethyl-2-thiouridine(34) in tRNA + S-adenosyl-L-methionine = 5-methylaminomethyl-2-thiouridine(34) in tRNA + S-adenosyl-L-homocysteine + H(+). In terms of biological role, catalyzes the last two steps in the biosynthesis of 5-methylaminomethyl-2-thiouridine (mnm(5)s(2)U) at the wobble position (U34) in tRNA. Catalyzes the FAD-dependent demodification of cmnm(5)s(2)U34 to nm(5)s(2)U34, followed by the transfer of a methyl group from S-adenosyl-L-methionine to nm(5)s(2)U34, to form mnm(5)s(2)U34. This Delftia acidovorans (strain DSM 14801 / SPH-1) protein is tRNA 5-methylaminomethyl-2-thiouridine biosynthesis bifunctional protein MnmC.